Consider the following 245-residue polypeptide: Eukaryotic translation initiation factor 6 (245 aa).

A phosphoserine; by CK1 mark is found at serine 174 and serine 175. Serine 231 bears the Phosphoserine mark.

Belongs to the eIF-6 family. In terms of assembly, monomer. Associates with the 60S ribosomal subunit. In terms of processing, phosphorylation at Ser-174 and Ser-175 promotes nuclear export.

The protein resides in the cytoplasm. The protein localises to the nucleus. It localises to the nucleolus. Its function is as follows. Binds to the 60S ribosomal subunit and prevents its association with the 40S ribosomal subunit to form the 80S initiation complex in the cytoplasm. Is also involved in ribosome biogenesis. Associates with pre-60S subunits in the nucleus and is involved in its nuclear export. Cytoplasmic release of TIF6 from 60S subunits and nuclear relocalization is promoted by the GTPase RIA1/EFL1 and by SDO1. Also required for pre-rRNA processing. This Saccharomyces cerevisiae (strain ATCC 204508 / S288c) (Baker's yeast) protein is Eukaryotic translation initiation factor 6.